A 347-amino-acid polypeptide reads, in one-letter code: Guanine nucleotide-binding protein alpha-5 subunit (347 aa).

The N-myristoyl glycine moiety is linked to residue glycine 2. The S-palmitoyl cysteine moiety is linked to residue cysteine 3. The region spanning 27 to 347 is the G-alpha domain; that stretch reads NETKLLLLGP…KNIFNTIINY (321 aa). The tract at residues 30 to 43 is G1 motif; it reads KLLLLGPGESGKST. GTP-binding positions include 35–42, 170–176, 195–199, 264–267, and alanine 319; these read GPGESGKS, LRSRVRT, DVGGQ, and NKVD. Serine 42 and threonine 176 together coordinate Mg(2+). The tract at residues 168 to 176 is G2 motif; that stretch reads DVLRSRVRT. The G3 motif stretch occupies residues 191 to 200; that stretch reads FRMLDVGGQR. Residues 260-267 are G4 motif; sequence IIFFNKVD. The segment at 317-322 is G5 motif; it reads TCAIDT.

It belongs to the G-alpha family. G(q) subfamily. As to quaternary structure, g proteins are composed of 3 units; alpha, beta and gamma. The alpha chain contains the guanine nucleotide binding site.

Its function is as follows. Guanine nucleotide-binding proteins (G proteins) are involved as modulators or transducers in various transmembrane signaling systems. This chain is Guanine nucleotide-binding protein alpha-5 subunit (gpaE), found in Dictyostelium discoideum (Social amoeba).